Consider the following 1438-residue polypeptide: Gag-Pol polyprotein (1438 aa).

Residue Gly-2 is the site of N-myristoyl glycine; by host attachment. The Nuclear export signal motif lies at 16–22; that stretch reads WEKIYLR. Positions 26 to 32 match the Nuclear localization signal motif; the sequence is KKKYMMK. 2 consecutive CCHC-type zinc fingers follow at residues 385–402 and 406–423; these read VKCF…NCKA and KGCW…NCTN. The tract at residues 439–481 is disordered; it reads GKAREFPSEETRTNSSTNRELRVQGGGTCPEGGSEERGDREQA. Residues 440–450 are compositionally biased toward basic and acidic residues; sequence KAREFPSEETR. In terms of domain architecture, Peptidase A2 spans 507–576; it reads KEALLDTGAD…TPVNIIGRNI (70 aa). Asp-512 acts as the For protease activity; shared with dimeric partner in catalysis. The 191-residue stretch at 630–820 folds into the Reverse transcriptase domain; the sequence is EGKISRVGPE…PPFLWMGYEL (191 aa). The Mg(2+) site is built by Asp-696, Asp-771, and Asp-772. The RT 'primer grip' stretch occupies residues 813–821; it reads FLWMGYELH. The short motif at 984 to 1000 is the Tryptophan repeat motif element; the sequence is WEAWWTDYWQATWIPEW. One can recognise an RNase H type-1 domain in the interval 1020-1143; that stretch reads IPGAETFYVD…IDKLVSSGIR (124 aa). Mg(2+) is bound by residues Asp-1029, Glu-1064, Asp-1084, and Asp-1135. The Integrase-type zinc-finger motif lies at 1149–1190; that stretch reads DGIDKAQEEHEKYHNNWRAMASDFNLPPIVAKEIVANCDKCQ. 4 residues coordinate Zn(2+): His-1158, His-1162, Cys-1186, and Cys-1189. Positions 1200-1350 constitute an Integrase catalytic domain; sequence VDCSPGIWQL…SAGERIIDIL (151 aa). Residues Asp-1210 and Asp-1262 each contribute to the Mg(2+) site. The segment at residues 1369 to 1416 is a DNA-binding region (integrase-type); it reads FRVYYRDSRDPIWKGPAKLLWKGEGAVVLQDQEEIKVVPRRKAKIIRD.

In terms of assembly, homotrimer. Interacts with gp41 (via C-terminus). As to quaternary structure, homodimer. The active site consists of two apposed aspartic acid residues. Heterodimer of p66 RT and p51 RT (RT p66/p51). Heterodimerization of RT is essential for DNA polymerase activity. Despite the sequence identities, p66 RT and p51 RT have distinct folding. In terms of assembly, homotetramer; may further associate as a homohexadecamer. Mg(2+) is required as a cofactor. In terms of processing, specific enzymatic cleavages by the viral protease yield mature proteins. The protease is released by autocatalytic cleavage. The polyprotein is cleaved during and after budding, this process is termed maturation. Proteolytic cleavage of p66 RT removes the RNase H domain to yield the p51 RT subunit. Post-translationally, capsid protein p24 is phosphorylated.

The protein resides in the virion. Its subcellular location is the host nucleus. It is found in the host cytoplasm. It localises to the host cell membrane. It catalyses the reaction Specific for a P1 residue that is hydrophobic, and P1' variable, but often Pro.. The enzyme catalyses Endohydrolysis of RNA in RNA/DNA hybrids. Three different cleavage modes: 1. sequence-specific internal cleavage of RNA. Human immunodeficiency virus type 1 and Moloney murine leukemia virus enzymes prefer to cleave the RNA strand one nucleotide away from the RNA-DNA junction. 2. RNA 5'-end directed cleavage 13-19 nucleotides from the RNA end. 3. DNA 3'-end directed cleavage 15-20 nucleotides away from the primer terminus.. It carries out the reaction 3'-end directed exonucleolytic cleavage of viral RNA-DNA hybrid.. The catalysed reaction is DNA(n) + a 2'-deoxyribonucleoside 5'-triphosphate = DNA(n+1) + diphosphate. Its activity is regulated as follows. The viral protease is inhibited by many synthetic protease inhibitors (PIs), such as amprenavir, atazanavir, indinavir, loprinavir, nelfinavir, ritonavir and saquinavir. RT can be inhibited either by nucleoside RT inhibitors (NRTIs) or by non nucleoside RT inhibitors (NNRTIs). NRTIs act as chain terminators, whereas NNRTIs inhibit DNA polymerization by binding a small hydrophobic pocket near the RT active site and inducing an allosteric change in this region. Classical NRTIs are abacavir, adefovir (PMEA), didanosine (ddI), lamivudine (3TC), stavudine (d4T), tenofovir (PMPA), zalcitabine (ddC), and zidovudine (AZT). Classical NNRTIs are atevirdine (BHAP U-87201E), delavirdine, efavirenz (DMP-266), emivirine (I-EBU), and nevirapine (BI-RG-587). The tritherapies used as a basic effective treatment of AIDS associate two NRTIs and one NNRTI. Use of protease inhibitors in tritherapy regimens permit more ambitious therapeutic strategies. In terms of biological role, gag-Pol polyprotein and Gag polyprotein may regulate their own translation, by the binding genomic RNA in the 5'-UTR. At low concentration, Gag-Pol and Gag would promote translation, whereas at high concentration, the polyproteins encapsidate genomic RNA and then shut off translation. Matrix protein p17 has two main functions: in infected cell, it targets Gag and Gag-pol polyproteins to the plasma membrane via a multipartite membrane-binding signal, that includes its myristointegration complex. The myristoylation signal and the NLS exert conflicting influences its subcellular localization. The key regulation of these motifs might be phosphorylation of a portion of MA molecules on the C-terminal tyrosine at the time of virus maturation, by virion-associated cellular tyrosine kinase. Implicated in the release from host cell mediated by Vpu. Functionally, capsid protein p24 forms the conical core that encapsulates the genomic RNA-nucleocapsid complex in the virion. The core is constituted by capsid protein hexamer subunits. The core is disassembled soon after virion entry. Interaction with host PPIA/CYPA protects the virus from restriction by host TRIM5-alpha and from an unknown antiviral activity in host cells. This capsid restriction by TRIM5 is one of the factors which restricts SIV to the simian species. Its function is as follows. Nucleocapsid protein p7 encapsulates and protects viral dimeric unspliced (genomic) RNA. Binds these RNAs through its zinc fingers. Facilitates rearangement of nucleic acid secondary structure during retrotranscription of genomic RNA. This capability is referred to as nucleic acid chaperone activity. In terms of biological role, the aspartyl protease mediates proteolytic cleavages of Gag and Gag-Pol polyproteins during or shortly after the release of the virion from the plasma membrane. Cleavages take place as an ordered, step-wise cascade to yield mature proteins. This process is called maturation. Displays maximal activity during the budding process just prior to particle release from the cell. Also cleaves Nef and Vif, probably concomitantly with viral structural proteins on maturation of virus particles. Hydrolyzes host EIF4GI and PABP1 in order to shut off the capped cellular mRNA translation. The resulting inhibition of cellular protein synthesis serves to ensure maximal viral gene expression and to evade host immune response. Reverse transcriptase/ribonuclease H (RT) is a multifunctional enzyme that converts the viral dimeric RNA genome into dsDNA in the cytoplasm, shortly after virus entry into the cell. This enzyme displays a DNA polymerase activity that can copy either DNA or RNA templates, and a ribonuclease H (RNase H) activity that cleaves the RNA strand of RNA-DNA heteroduplexes in a partially processive 3' to 5' endonucleasic mode. Conversion of viral genomic RNA into dsDNA requires many steps. A tRNA binds to the primer-binding site (PBS) situated at the 5'-end of the viral RNA. RT uses the 3' end of the tRNA primer to perform a short round of RNA-dependent minus-strand DNA synthesis. The reading proceeds through the U5 region and ends after the repeated (R) region which is present at both ends of viral RNA. The portion of the RNA-DNA heteroduplex is digested by the RNase H, resulting in a ssDNA product attached to the tRNA primer. This ssDNA/tRNA hybridizes with the identical R region situated at the 3' end of viral RNA. This template exchange, known as minus-strand DNA strong stop transfer, can be either intra- or intermolecular. RT uses the 3' end of this newly synthesized short ssDNA to perform the RNA-dependent minus-strand DNA synthesis of the whole template. RNase H digests the RNA template except for two polypurine tracts (PPTs) situated at the 5'-end and near the center of the genome. It is not clear if both polymerase and RNase H activities are simultaneous. RNase H can probably proceed both in a polymerase-dependent (RNA cut into small fragments by the same RT performing DNA synthesis) and a polymerase-independent mode (cleavage of remaining RNA fragments by free RTs). Secondly, RT performs DNA-directed plus-strand DNA synthesis using the PPTs that have not been removed by RNase H as primers. PPTs and tRNA primers are then removed by RNase H. The 3' and 5' ssDNA PBS regions hybridize to form a circular dsDNA intermediate. Strand displacement synthesis by RT to the PBS and PPT ends produces a blunt ended, linear dsDNA copy of the viral genome that includes long terminal repeats (LTRs) at both ends. Functionally, integrase catalyzes viral DNA integration into the host chromosome, by performing a series of DNA cutting and joining reactions. This enzyme activity takes place after virion entry into a cell and reverse transcription of the RNA genome in dsDNA. The first step in the integration process is 3' processing. This step requires a complex comprising the viral genome, matrix protein, Vpr and integrase. This complex is called the pre-integration complex (PIC). The integrase protein removes 2 nucleotides from each 3' end of the viral DNA, leaving recessed CA OH's at the 3' ends. In the second step, the PIC enters cell nucleus. This process is mediated through integrase and Vpr proteins, and allows the virus to infect a non dividing cell. This ability to enter the nucleus is specific of lentiviruses, other retroviruses cannot and rely on cell division to access cell chromosomes. In the third step, termed strand transfer, the integrase protein joins the previously processed 3' ends to the 5' ends of strands of target cellular DNA at the site of integration. The 5'-ends are produced by integrase-catalyzed staggered cuts, 5 bp apart. A Y-shaped, gapped, recombination intermediate results, with the 5'-ends of the viral DNA strands and the 3' ends of target DNA strands remaining unjoined, flanking a gap of 5 bp. The last step is viral DNA integration into host chromosome. This involves host DNA repair synthesis in which the 5 bp gaps between the unjoined strands are filled in and then ligated. Since this process occurs at both cuts flanking the SIV genome, a 5 bp duplication of host DNA is produced at the ends of SIV integration. Alternatively, Integrase may catalyze the excision of viral DNA just after strand transfer, this is termed disintegration. The polypeptide is Gag-Pol polyprotein (gag-pol) (Pan troglodytes (Chimpanzee)).